Here is a 725-residue protein sequence, read N- to C-terminus: ATP-dependent RNA helicase DRS1 (725 aa).

The interval 14-184 (DFVPTISDSE…AEEKVEEDTA (171 aa)) is disordered. The segment covering 21–33 (DSEEDVPDLDSDE) has biased composition (acidic residues). Composition is skewed to basic and acidic residues over residues 85-95 (EEKKDVDLDKI) and 107-116 (HVDEAEKSES). 2 stretches are compositionally biased toward acidic residues: residues 117–127 (EESESDDEDLA) and 139–184 (PEGE…EDTA). The Q motif signature appears at 206–234 (KTFNDLALSRPVMKGLSNLGYVKPSPIQS). Residues 237 to 412 (IPIALLGKDI…SLSLKRPVRI (176 aa)) enclose the Helicase ATP-binding domain. ATP is bound at residue 250–257 (AVTGSGKT). The DEAD box motif lies at 360–363 (DEAD). One can recognise a Helicase C-terminal domain in the interval 423–613 (KLTQEFVRIR…NMDQTVQDIL (191 aa)). A coiled-coil region spans residues 607-686 (QTVQDILVEE…KRKRNEAMED (80 aa)). Residues 646–725 (PKRTWFQSEK…KKKGKSKGKR (80 aa)) form a disordered region. The segment covering 669–707 (TKKEVNSKKRKRNEAMEDGHKRSYKKTQSDRTADQERTM) has biased composition (basic and acidic residues). The segment covering 708 to 725 (KKQAKANGKKKGKSKGKR) has biased composition (basic residues).

This sequence belongs to the DEAD box helicase family. DDX27/DRS1 subfamily. Associates with pre-ribosomal particles.

The protein resides in the nucleus. It localises to the nucleolus. The enzyme catalyses ATP + H2O = ADP + phosphate + H(+). Its function is as follows. ATP-binding RNA helicase involved in ribosome assembly. The polypeptide is ATP-dependent RNA helicase DRS1 (DRS1) (Candida glabrata (strain ATCC 2001 / BCRC 20586 / JCM 3761 / NBRC 0622 / NRRL Y-65 / CBS 138) (Yeast)).